Here is a 266-residue protein sequence, read N- to C-terminus: Putative pyruvate, phosphate dikinase regulatory protein (266 aa).

149–156 (GVSRTSKT) contacts ADP.

Belongs to the pyruvate, phosphate/water dikinase regulatory protein family. PDRP subfamily.

The enzyme catalyses N(tele)-phospho-L-histidyl/L-threonyl-[pyruvate, phosphate dikinase] + ADP = N(tele)-phospho-L-histidyl/O-phospho-L-threonyl-[pyruvate, phosphate dikinase] + AMP + H(+). It catalyses the reaction N(tele)-phospho-L-histidyl/O-phospho-L-threonyl-[pyruvate, phosphate dikinase] + phosphate + H(+) = N(tele)-phospho-L-histidyl/L-threonyl-[pyruvate, phosphate dikinase] + diphosphate. Functionally, bifunctional serine/threonine kinase and phosphorylase involved in the regulation of the pyruvate, phosphate dikinase (PPDK) by catalyzing its phosphorylation/dephosphorylation. The protein is Putative pyruvate, phosphate dikinase regulatory protein of Geobacillus sp. (strain WCH70).